The chain runs to 480 residues: MASPAPEEHATQGCPATEEQEPRPGVPGEEAGPEGAGPQVEEAAGRVAAALTWLLGEPVLWLGWRADELLSWKRPLRSLLAFLGANLLFWFLALTPWRVYHLISVMILGRVIMQIIKDMVLSRARGAQLWRSLSESWEVINSKPDERPRLSHCIAESWMNFSIFLQEMSLFKQQSPGKFCLLVCSVCTFFTILGSYIPGVILSYLLLLFAFLCPLFKCNDIGQKIYSKVKSILLKLDFGIGEYINQKKRERSEADKEKSHKDDSEIDFSALCPKISLTVAAKELSVSDTDVSEVSWTDNGTFNLSEGYTPQTDTSDDLDRPSEEVFSRDLSDFPSLENGAGTNDEDELSLGLPTELKTKKQQLNSAHRPSKDRQSAAGLSLPLKSDQALHLMSNLAGDVITAAMTAAIKDQLEGARQALAQAAPTPGDDTDTEEGDDFELLDQAELDQIESELGLTQDQGAEAQQSKKSSGFLSNLLGGH.

The segment covering Met-1–Ala-10 has biased composition (basic and acidic residues). Residues Met-1–Glu-41 are disordered. The Cytoplasmic segment spans residues Met-1–Ala-43. Residues Ala-44–Trp-64 traverse the membrane as a helical segment. Topologically, residues Arg-65–Ser-78 are lumenal. The segment at Asp-67–Phe-216 is reticulon homology domain. The chain crosses the membrane as a helical span at residues Leu-79 to Val-99. Topologically, residues Tyr-100–His-101 are cytoplasmic. A helical membrane pass occupies residues Leu-102–Ser-122. Over Arg-123–Thr-191 the chain is Lumenal. A Phosphoserine modification is found at Ser-132. Ser-134 carries the post-translational modification Phosphoserine; by CAMK2B. Residue Ser-136 is modified to Phosphoserine. A helical transmembrane segment spans residues Ile-192–Leu-212. The Cytoplasmic portion of the chain corresponds to Cys-213–His-480. Positions Phe-302–Asp-313 are enriched in polar residues. The tract at residues Phe-302–Leu-348 is disordered. Residues Asp-317–Ser-331 show a composition bias toward basic and acidic residues. The LIR motif motif lies at Asp-436–Leu-441. Residues Glu-450–His-480 are disordered. Residues Gly-454 to Leu-473 show a composition bias toward polar residues.

This sequence belongs to the RETREG family. Homooligomer; oligomerization is enhanced following endoplasmic reticulum stress and is mediated by the reticulon homology domain. Interacts with ATG8 family modifier proteins MAP1LC3A, MAP1LC3B, GABARAP, GABARAPL1 and GABARAPL2. In terms of processing, phosphorylation at Ser-134 by CAMK2B enhances oligomerization and membrane scission and reticulophagy activity.

Its subcellular location is the golgi apparatus. It is found in the cis-Golgi network membrane. It localises to the endoplasmic reticulum membrane. In terms of biological role, endoplasmic reticulum (ER)-anchored autophagy regulator which mediates ER delivery into lysosomes through sequestration into autophagosomes. Promotes membrane remodeling and ER scission via its membrane bending capacity and targets the fragments into autophagosomes via interaction with ATG8 family proteins. Active under basal conditions. Required for collagen quality control in a LIR motif-dependent manner. Required for long-term survival of nociceptive and autonomic ganglion neurons. In Rattus norvegicus (Rat), this protein is Reticulophagy regulator 1.